Reading from the N-terminus, the 546-residue chain is MFHSLLVKNFILIDELEIEFNKGLCVITGETGAGKSILLDAILFCLGYKTSNNIIKRGKDYAVVNIIFSLNEEIKNFLIQNFIEPEELLLVKCLQKAEGRKNFFINNQVVNKAIMQQLATYLFELHGQNNNISLLEANTQRDILDSYGNLLDFRAELSKCYQTWQNTRKEIAEITLKQNSIDQEIDYLSFATEELTKLNIQIGEEEKLANIRKDLQNKDKDLQLIKDVLEQINNPEINTSINRAEKLLARQGDNERFEAIATSLEEAYNNLEEARQGLSNLLDSFNYEEYNLEETEERLFLIKAISRKYNVPADELGIFLDKSLEQLGILKNKIANSNELKAQEMLLQKKYYELASDLSVKRLIAAKHLEESLHQELKQLKMAKAIFEIEIIAGKEPTASGNDDIVFKASTNPGMATEAINKIASGGELSRFMLALKTSLFDKMVKPSIIFDEIDVGIGGEVADKVGERLKKLSSVTQVIVITHQPQVAGKADLHIKIEKTQLEKETKVTVKALNLAERQEELARMISGKTITEASLKAAKELLHL.

Position 29–36 (29–36) interacts with ATP; the sequence is GETGAGKS.

This sequence belongs to the RecN family.

Its function is as follows. May be involved in recombinational repair of damaged DNA. This Rickettsia felis (strain ATCC VR-1525 / URRWXCal2) (Rickettsia azadi) protein is DNA repair protein RecN (recN).